The sequence spans 1823 residues: THO complex subunit 2 (1823 aa).

Residues 935–1003 (NRYESEISKQ…RRRLSREKDT (69 aa)) are a coiled coil. Positions 964-969 (KRKKEK) match the Nuclear localization signal motif. Disordered regions lie at residues 1244–1382 (LVGV…KDLN) and 1394–1823 (ALSS…GSRE). Basic and acidic residues-rich tracts occupy residues 1272–1283 (QMLKTKPLDGRT), 1312–1330 (KSME…DENP), and 1356–1367 (AKQDFGKDDGKS). The span at 1394–1409 (ALSSTAANGSIATGSS) shows a compositional bias: polar residues. Basic and acidic residues predominate over residues 1432-1596 (PRHEIVTSVR…EKSHPDDHFH (165 aa)). The segment covering 1600–1610 (LPPPPPLPPNI) has biased composition (pro residues). 4 stretches are compositionally biased toward basic and acidic residues: residues 1616–1625 (AAKEDLERRA), 1636–1648 (PRHE…RSEE), 1655–1706 (DDAK…FEAS), and 1768–1785 (LGKE…DPIA). 2 positions are modified to phosphoserine: Ser1646 and Ser1696. Over residues 1802-1816 (MTVNGKTTRGEQSGS) the composition is skewed to polar residues.

It belongs to the THOC2 family. Component of the THO complex, which is composed of THO1, THO2, THO3, THO5, THO6 and THO7.

It is found in the nucleus. Acts as a component of the THO subcomplex of the TREX complex which is thought to couple mRNA transcription, processing and nuclear export. The chain is THO complex subunit 2 (THO2) from Arabidopsis thaliana (Mouse-ear cress).